The primary structure comprises 267 residues: Glutamate 5-kinase (267 aa).

Lysine 14 contacts ATP. Substrate is bound by residues serine 54, aspartate 141, and asparagine 157. ATP-binding positions include 177–178 (SD) and 219–225 (TGGMMSK).

This sequence belongs to the glutamate 5-kinase family.

The protein localises to the cytoplasm. The catalysed reaction is L-glutamate + ATP = L-glutamyl 5-phosphate + ADP. It participates in amino-acid biosynthesis; L-proline biosynthesis; L-glutamate 5-semialdehyde from L-glutamate: step 1/2. In terms of biological role, catalyzes the transfer of a phosphate group to glutamate to form L-glutamate 5-phosphate. The polypeptide is Glutamate 5-kinase (Streptococcus thermophilus).